The primary structure comprises 395 residues: tRNA (guanine-N(7)-)-methyltransferase (395 aa).

S-adenosyl-L-methionine-binding residues include E126, E151, and D178. Substrate-binding residues include K204 and D234.

Belongs to the class I-like SAM-binding methyltransferase superfamily. TrmB family.

It catalyses the reaction guanosine(46) in tRNA + S-adenosyl-L-methionine = N(7)-methylguanosine(46) in tRNA + S-adenosyl-L-homocysteine. Its pathway is tRNA modification; N(7)-methylguanine-tRNA biosynthesis. In terms of biological role, catalyzes the formation of N(7)-methylguanine at position 46 (m7G46) in tRNA. In Campylobacter fetus subsp. fetus (strain 82-40), this protein is tRNA (guanine-N(7)-)-methyltransferase.